Reading from the N-terminus, the 711-residue chain is Double-stranded RNA-specific editase 1 (711 aa).

Residues 1 to 78 form a disordered region; the sequence is MDIEDEENMS…KRRKTPGPVL (78 aa). Over residues 63 to 73 the composition is skewed to basic residues; it reads SKYRLKKRRKT. The DRBM 1 domain maps to 78–144; that stretch reads LPKNALMQLN…AEKALRSFVQ (67 aa). Interaction with substrate RNA stretches follow at residues 83–88 and 104–105; these read LMQLNE and VH. Ser-149 is modified (phosphoserine). A disordered region spans residues 176-220; it reads LFNGFETPDKSEPPFYVGSNGDDSFSSSGDVSLSASPVPASLTQP. Residues 192–213 are compositionally biased toward low complexity; it reads VGSNGDDSFSSSGDVSLSASPV. In terms of domain architecture, DRBM 2 spans 231–298; the sequence is PSGKNPVMIL…AQSALATVFN (68 aa). Interaction with substrate RNA regions lie at residues 237–242 and His-259; that span reads VMILNE. One can recognise an A to I editase domain in the interval 370–707; sequence SVSTGTKCIN…VEKPTEQDQF (338 aa). Residue His-394 participates in Zn(2+) binding. Glu-396 serves as the catalytic Proton donor. 1D-myo-inositol hexakisphosphate contacts are provided by Arg-400 and Arg-401. Positions 451 and 526 each coordinate Zn(2+). 1D-myo-inositol hexakisphosphate is bound by residues Lys-529, Arg-532, Lys-639, Lys-672, Lys-682, and Lys-700.

In terms of assembly, homodimer. Homodimerization is essential for its catalytic activity. Can form heterodimers with isoform 5 of ADAR/ADAR1. 1D-myo-inositol hexakisphosphate serves as cofactor.

It is found in the nucleus. Its subcellular location is the nucleolus. The enzyme catalyses adenosine in double-stranded RNA + H2O + H(+) = inosine in double-stranded RNA + NH4(+). In terms of biological role, catalyzes the hydrolytic deamination of adenosine to inosine in double-stranded RNA (dsRNA) referred to as A-to-I RNA editing. This may affect gene expression and function in a number of ways that include mRNA translation by changing codons and hence the amino acid sequence of proteins; pre-mRNA splicing by altering splice site recognition sequences; RNA stability by changing sequences involved in nuclease recognition; genetic stability in the case of RNA virus genomes by changing sequences during viral RNA replication; and RNA structure-dependent activities such as microRNA production or targeting or protein-RNA interactions. Can edit both viral and cellular RNAs and can edit RNAs at multiple sites (hyper-editing) or at specific sites (site-specific editing). Its cellular RNA substrates include: bladder cancer-associated protein (BLCAP), neurotransmitter receptors for glutamate (GRIA2 and GRIK2) and serotonin (HTR2C), GABA receptor (GABRA3) and potassium voltage-gated channel (KCNA1). Site-specific RNA editing of transcripts encoding these proteins results in amino acid substitutions which consequently alter their functional activities. Edits GRIA2 at both the Q/R and R/G sites efficiently but converts the adenosine in hotspot1 much less efficiently. Can inhibit cell proliferation and migration and can stimulate exocytosis. This Mus musculus (Mouse) protein is Double-stranded RNA-specific editase 1 (Adarb1).